The sequence spans 68 residues: Large ribosomal subunit protein uL30 (68 aa).

It belongs to the universal ribosomal protein uL30 family. Part of the 50S ribosomal subunit.

The chain is Large ribosomal subunit protein uL30 from Paenarthrobacter aurescens (strain TC1).